The chain runs to 570 residues: MNVVFAVKQYISKMIEDSGPGMKVLLMDKETTGIVSMVYTQSEILQKEVYLFERIDSQNREIMKHLKAICFLRPTKENVDSLIQELRRPKYSIYFIYFSNVISKSDVKSLAEADEQEVVAEVQEFYGDYIAVNPHLFSLNILGCCQGRNWDPAQLSRTTQGLTALLLSLKKCPMIRYQLSSEAAKRLGECVKQVISKEYELFEFRRTEVPPLLLILDRCDDAITPLLNQWTYQAMVHELLGINNNRIDLSRVPGISKDLREVVLSAENDEFYANNMYLNFAEIGSNIKNLMEDFQKKRPKEQQKLESIADMKAFVENYPQFKKMSGTVSKHVTVVGELSRLVSERNLLEVSEVEQELACQNDHSSALQNVKRLLQNPKVTEFDAVRLVMLYALHYERHSSNSLPGLIVDLRSKGVAEKYRKLVSAVVEYGGKRVRGSDLFSPKDAVAITKQFLKGLKGVENVYTQHQPFLHETLDHLIKGKLKENLYPYLGPSTLRDRPQDIIVFVIGGATYEEALTVYNLNRTTPGVRIVLGGTTIHNTKSFLEEVLASGLHSRSRESSQATSRSASRR.

Phosphoserine occurs at positions 307 and 441.

Belongs to the STXBP/unc-18/SEC1 family. Interacts with STX6 and ZFYVE20. As to expression, ubiquitous; expression was highest in testis and in brain. Detected in every part of the brain.

The protein resides in the golgi apparatus membrane. The protein localises to the endosome membrane. Its function is as follows. May play a role in vesicle-mediated protein trafficking from the Golgi stack through the trans-Golgi network. In Rattus norvegicus (Rat), this protein is Vacuolar protein sorting-associated protein 45 (Vps45).